A 739-amino-acid chain; its full sequence is Eukaryotic translation initiation factor 3 subunit B (739 aa).

Positions 1–98 are sufficient for interaction with HCR1 and TIF32; that stretch reads MSINEEDYLQ…LFIQFKSTES (98 aa). Residues 1 to 224 are sufficient for interaction with PIC8; it reads MSINEEDYLQ…GIQSWGGANF (224 aa). The RRM domain maps to 37–124; sequence NYIIVDGAPI…HRLLVNKLSD (88 aa). WD repeat units follow at residues 190–229, 231–293, 301–339, 343–385, 453–502, 537–579, and 592–630; these read PRKG…SIKR, FHQQ…RTFA, QKEM…QLLD, VKVD…QTAR, ELKD…KGGV, IENK…ETNK, and DKFS…YEFT.

The protein belongs to the eIF-3 subunit B family. Component of the eukaryotic translation initiation factor 3 (eIF-3) complex.

The protein localises to the cytoplasm. Functionally, RNA-binding component of the eukaryotic translation initiation factor 3 (eIF-3) complex, which is involved in protein synthesis of a specialized repertoire of mRNAs and, together with other initiation factors, stimulates binding of mRNA and methionyl-tRNAi to the 40S ribosome. The eIF-3 complex specifically targets and initiates translation of a subset of mRNAs involved in cell proliferation. This Candida albicans (strain SC5314 / ATCC MYA-2876) (Yeast) protein is Eukaryotic translation initiation factor 3 subunit B.